Here is a 248-residue protein sequence, read N- to C-terminus: Ribosomal RNA small subunit methyltransferase J (248 aa).

Residues Arg98–Asp99, Glu114–Arg115, Ser150–Ser151, and Asp168 each bind S-adenosyl-L-methionine.

Belongs to the methyltransferase superfamily. RsmJ family.

The protein localises to the cytoplasm. The enzyme catalyses guanosine(1516) in 16S rRNA + S-adenosyl-L-methionine = N(2)-methylguanosine(1516) in 16S rRNA + S-adenosyl-L-homocysteine + H(+). Its function is as follows. Specifically methylates the guanosine in position 1516 of 16S rRNA. The polypeptide is Ribosomal RNA small subunit methyltransferase J (Shewanella baltica (strain OS185)).